The primary structure comprises 315 residues: tRNA dimethylallyltransferase (315 aa).

ATP is bound at residue 10 to 17; it reads GPTAVGKT. 12–17 is a binding site for substrate; the sequence is TAVGKT. The segment at 35–38 is interaction with substrate tRNA; sequence DSMQ.

It belongs to the IPP transferase family. Monomer. Mg(2+) is required as a cofactor.

The catalysed reaction is adenosine(37) in tRNA + dimethylallyl diphosphate = N(6)-dimethylallyladenosine(37) in tRNA + diphosphate. In terms of biological role, catalyzes the transfer of a dimethylallyl group onto the adenine at position 37 in tRNAs that read codons beginning with uridine, leading to the formation of N6-(dimethylallyl)adenosine (i(6)A). The sequence is that of tRNA dimethylallyltransferase from Geobacillus kaustophilus (strain HTA426).